The following is a 780-amino-acid chain: LPS-assembly protein LptD (780 aa).

A signal peptide spans 1–24; that stretch reads MKKRLPTLLASLIGSALYSQQALA.

The protein belongs to the LptD family. As to quaternary structure, component of the lipopolysaccharide transport and assembly complex. Interacts with LptE and LptA.

It is found in the cell outer membrane. Its function is as follows. Together with LptE, is involved in the assembly of lipopolysaccharide (LPS) at the surface of the outer membrane. This chain is LPS-assembly protein LptD, found in Sodalis glossinidius (strain morsitans).